The following is a 63-amino-acid chain: Cytochrome c oxidase subunit 7C, mitochondrial (63 aa).

A mitochondrion-targeting transit peptide spans 1 to 16 (MLGQSIRRFTTSVVRR). The Mitochondrial matrix segment spans residues 17-34 (SHYEEGPGKNLPFSVENK). Lys-25 bears the N6-acetyllysine; alternate mark. The residue at position 25 (Lys-25) is an N6-succinyllysine; alternate. The helical transmembrane segment at 35–57 (WRLLAMMTVYFGSGFAAPFFIVR) threads the bilayer. Residues 58 to 63 (HQLLKK) are Mitochondrial intermembrane-facing.

This sequence belongs to the cytochrome c oxidase VIIc family. In terms of assembly, component of the cytochrome c oxidase (complex IV, CIV), a multisubunit enzyme composed of 14 subunits. The complex is composed of a catalytic core of 3 subunits MT-CO1, MT-CO2 and MT-CO3, encoded in the mitochondrial DNA, and 11 supernumerary subunits COX4I, COX5A, COX5B, COX6A, COX6B, COX6C, COX7A, COX7B, COX7C, COX8 and NDUFA4, which are encoded in the nuclear genome. The complex exists as a monomer or a dimer and forms supercomplexes (SCs) in the inner mitochondrial membrane with NADH-ubiquinone oxidoreductase (complex I, CI) and ubiquinol-cytochrome c oxidoreductase (cytochrome b-c1 complex, complex III, CIII), resulting in different assemblies (supercomplex SCI(1)III(2)IV(1) and megacomplex MCI(2)III(2)IV(2)). Interacts with RAB5IF.

The protein resides in the mitochondrion inner membrane. It functions in the pathway energy metabolism; oxidative phosphorylation. Its function is as follows. Component of the cytochrome c oxidase, the last enzyme in the mitochondrial electron transport chain which drives oxidative phosphorylation. The respiratory chain contains 3 multisubunit complexes succinate dehydrogenase (complex II, CII), ubiquinol-cytochrome c oxidoreductase (cytochrome b-c1 complex, complex III, CIII) and cytochrome c oxidase (complex IV, CIV), that cooperate to transfer electrons derived from NADH and succinate to molecular oxygen, creating an electrochemical gradient over the inner membrane that drives transmembrane transport and the ATP synthase. Cytochrome c oxidase is the component of the respiratory chain that catalyzes the reduction of oxygen to water. Electrons originating from reduced cytochrome c in the intermembrane space (IMS) are transferred via the dinuclear copper A center (CU(A)) of subunit 2 and heme A of subunit 1 to the active site in subunit 1, a binuclear center (BNC) formed by heme A3 and copper B (CU(B)). The BNC reduces molecular oxygen to 2 water molecules using 4 electrons from cytochrome c in the IMS and 4 protons from the mitochondrial matrix. This chain is Cytochrome c oxidase subunit 7C, mitochondrial (Cox7c), found in Mus musculus (Mouse).